Reading from the N-terminus, the 325-residue chain is MFARFTFRTCRPAGQAIRKYASEASPKPSSNVPLYGGLALAAGGAYYYWQRQQSPQALEAALKERSKVFIGGDQGWVDLKLAGIETLSHNVKRFRFEFPDSESVSGLHIASALLTKYKGPKDEKPTIRPYTPVSEEEQPGYLDLVVKQYPNGPMSTHLHNMAVGQQLSFKGPIPKYPWEQNKHDHICMIAGGTGITPMYQIIRKIFNNPNDKTKVTLVFGNITEEDILLKKELDILENTYPRRFRAFYLLDKPPAGWTQGTGYVTKELLKTVLPEPKTENIKIFVCGPPGMYKAVSGPKNSPKDQGELTGLLKELGYDKDQVYKF.

Residues 32–48 traverse the membrane as a helical segment; sequence VPLYGGLALAAGGAYYY. Residues 74 to 179 form the FAD-binding FR-type domain; the sequence is QGWVDLKLAG…KGPIPKYPWE (106 aa). 182-217 contacts FAD; sequence KHDHICMIAGGTGITPMYQIIRKIFNNPNDKTKVTL.

Belongs to the flavoprotein pyridine nucleotide cytochrome reductase family. Requires FAD as cofactor.

The protein resides in the mitochondrion outer membrane. The enzyme catalyses 2 Fe(III)-[cytochrome b5] + NADH = 2 Fe(II)-[cytochrome b5] + NAD(+) + H(+). Its function is as follows. May mediate the reduction of outer membrane cytochrome b5. In Coccidioides immitis (strain RS) (Valley fever fungus), this protein is NADH-cytochrome b5 reductase 2 (MCR1).